The following is a 331-amino-acid chain: MKVYYEKDANLEALKGKTVAIIGYGSQGHAHAQNLRDSGISVIVGQRPGGANYALAKEHGFEPVSAAEAAAKADLIMILLPDQVQAAVYEAEIKPNLKAGDALLFAHGFNIHFGQIEPPKDVDVFMIAPKGPGHLVRRTYTEGGGVPCLVAVHQDATGKAMEKALAYAKGVGGSRSGVIETTFREETETDLFGEQAVLCGGLSSLIKAGFETLVEAGYQPEIAYFECLHEVKLIVDLIYEGGLERMRYSISDTAEYGDYVTGKRIVTEETKKEMKKVLRDIQDGTFARNFILEAKAGYPGFKATRRLEAEHQIEKVGGELRGMMPWLKKKV.

The region spanning 1-181 is the KARI N-terminal Rossmann domain; sequence MKVYYEKDAN…GGSRSGVIET (181 aa). NADP(+) contacts are provided by residues 24 to 27, Arg-47, and 82 to 85; these read YGSQ and DQVQ. Residue His-107 is part of the active site. Gly-133 serves as a coordination point for NADP(+). Residues 182 to 327 form the KARI C-terminal knotted domain; it reads TFREETETDL…GELRGMMPWL (146 aa). Residues Asp-190, Glu-194, Glu-226, and Glu-230 each coordinate Mg(2+). Ser-251 serves as a coordination point for substrate.

Belongs to the ketol-acid reductoisomerase family. Requires Mg(2+) as cofactor.

The catalysed reaction is (2R)-2,3-dihydroxy-3-methylbutanoate + NADP(+) = (2S)-2-acetolactate + NADPH + H(+). It carries out the reaction (2R,3R)-2,3-dihydroxy-3-methylpentanoate + NADP(+) = (S)-2-ethyl-2-hydroxy-3-oxobutanoate + NADPH + H(+). Its pathway is amino-acid biosynthesis; L-isoleucine biosynthesis; L-isoleucine from 2-oxobutanoate: step 2/4. It functions in the pathway amino-acid biosynthesis; L-valine biosynthesis; L-valine from pyruvate: step 2/4. Functionally, involved in the biosynthesis of branched-chain amino acids (BCAA). Catalyzes an alkyl-migration followed by a ketol-acid reduction of (S)-2-acetolactate (S2AL) to yield (R)-2,3-dihydroxy-isovalerate. In the isomerase reaction, S2AL is rearranged via a Mg-dependent methyl migration to produce 3-hydroxy-3-methyl-2-ketobutyrate (HMKB). In the reductase reaction, this 2-ketoacid undergoes a metal-dependent reduction by NADPH to yield (R)-2,3-dihydroxy-isovalerate. The protein is Ketol-acid reductoisomerase (NADP(+)) of Nitratidesulfovibrio vulgaris (strain ATCC 29579 / DSM 644 / CCUG 34227 / NCIMB 8303 / VKM B-1760 / Hildenborough) (Desulfovibrio vulgaris).